Reading from the N-terminus, the 103-residue chain is Carboxysome shell protein CcmK3 (103 aa).

The 88-residue stretch at 4-91 (AVGVIQTLGF…PPENVLAVLP (88 aa)) folds into the BMC domain.

This sequence belongs to the bacterial microcompartments protein family. CcmK subfamily. In terms of assembly, forms mixed heterohexamers with CcmK4, probably with 1:5 CcmK3:CcmK4 stoichiometry. Only very weak interactions with CcmK1 and CcmK2 were seen. Bulky residues in the pore region probably preclude the formation of homohexamers by this subunit.

The protein localises to the carboxysome. Functionally, a probably minor shell protein component of the carboxysome, a polyhedral inclusion where RuBisCO (ribulose bisphosphate carboxylase, rbcL-rbcS) is sequestered. This subunit probably does not form homohexamers. This Synechocystis sp. (strain ATCC 27184 / PCC 6803 / Kazusa) protein is Carboxysome shell protein CcmK3.